The following is a 330-amino-acid chain: uncharacterized protein (330 aa).

This is an uncharacterized protein from Archaeoglobus fulgidus (strain ATCC 49558 / DSM 4304 / JCM 9628 / NBRC 100126 / VC-16).